Here is a 196-residue protein sequence, read N- to C-terminus: ATP-dependent Clp protease proteolytic subunit (196 aa).

The active-site Nucleophile is Ser101. His126 is a catalytic residue.

This sequence belongs to the peptidase S14 family. As to quaternary structure, component of the chloroplastic Clp protease core complex.

It localises to the plastid. Its subcellular location is the chloroplast stroma. The catalysed reaction is Hydrolysis of proteins to small peptides in the presence of ATP and magnesium. alpha-casein is the usual test substrate. In the absence of ATP, only oligopeptides shorter than five residues are hydrolyzed (such as succinyl-Leu-Tyr-|-NHMec, and Leu-Tyr-Leu-|-Tyr-Trp, in which cleavage of the -Tyr-|-Leu- and -Tyr-|-Trp bonds also occurs).. Its function is as follows. Cleaves peptides in various proteins in a process that requires ATP hydrolysis. Has a chymotrypsin-like activity. Plays a major role in the degradation of misfolded proteins. The protein is ATP-dependent Clp protease proteolytic subunit of Lactuca sativa (Garden lettuce).